A 184-amino-acid polypeptide reads, in one-letter code: UPF0398 protein OB1025 (184 aa).

The protein belongs to the UPF0398 family.

This Oceanobacillus iheyensis (strain DSM 14371 / CIP 107618 / JCM 11309 / KCTC 3954 / HTE831) protein is UPF0398 protein OB1025.